We begin with the raw amino-acid sequence, 458 residues long: Monomethylamine methyltransferase MtmB (458 aa).

Pyl202 is a non-standard amino acid (pyrrolysine).

It belongs to the monomethylamine methyltransferase family. As to quaternary structure, can form a complex with MtmC.

It carries out the reaction Co(I)-[methylamine-specific corrinoid protein] + methylamine + H(+) = methyl-Co(III)-[methylamine-specific corrinoid protein] + NH4(+). Its pathway is one-carbon metabolism; methanogenesis from methylamine. Its function is as follows. Catalyzes the transfer of the methyl group from monomethylamine to the corrinoid cofactor of MtmC. The sequence is that of Monomethylamine methyltransferase MtmB (mtmB1) from Methanosarcina mazei (strain ATCC BAA-159 / DSM 3647 / Goe1 / Go1 / JCM 11833 / OCM 88) (Methanosarcina frisia).